The following is a 75-amino-acid chain: MPKYYEDKEDDGRACSGLREDFKACLLQHDCVVKEGKKPSECLKEGHCRSMQVAFFECKRSMLDTRSRFRGRKGE.

The CHCH domain maps to 28-66 (QHDCVVKEGKKPSECLKEGHCRSMQVAFFECKRSMLDTR). A Cx10C motif motif is present at residues 31 to 42 (CVVKEGKKPSEC). Intrachain disulfides connect cysteine 31–cysteine 58 and cysteine 42–cysteine 48. The short motif at 48-58 (CRSMQVAFFEC) is the Cx9C motif element.

This sequence belongs to the PET191 family.

In terms of biological role, involved in an early step of the mitochondrial complex IV assembly process. The chain is Cytochrome c oxidase assembly factor 5 (coa5) from Danio rerio (Zebrafish).